The primary structure comprises 211 residues: Riboflavin kinase (211 aa).

An H-T-H motif-like region spans residues 1–85 (MKKILMLIEL…CDKISNALSK (85 aa)). The tract at residues 86-211 (GVIVGEVVSG…GDRVRLEVIQ (126 aa)) is riboflavin kinase. 95–100 (GLGEGA) contributes to the CDP binding site. The Mg(2+) site is built by threonine 122 and asparagine 124. FMN-binding residues include threonine 178 and glutamate 186. 191–194 (VNLR) lines the CDP pocket.

It belongs to the archaeal riboflavin kinase family. Mg(2+) is required as a cofactor.

The catalysed reaction is riboflavin + CTP = CDP + FMN + H(+). Its pathway is cofactor biosynthesis; FMN biosynthesis; FMN from riboflavin (CTP route): step 1/1. Catalyzes the CTP-dependent phosphorylation of riboflavin (vitamin B2) to form flavin mononucleotide (FMN). In Thermococcus kodakarensis (strain ATCC BAA-918 / JCM 12380 / KOD1) (Pyrococcus kodakaraensis (strain KOD1)), this protein is Riboflavin kinase (ribK).